The following is a 296-amino-acid chain: MKIIVPATSANLGAGFDSIGIAVNLYLTVEVLGESRDWKIDHDLGENIPTDERNLLLTTLSAVLEDKNVALSAKFHLKMTSEVPLARGLGSSSSVIIAGIELANQLAKLNLTSDEKLKLACEIEGHPDNVAPALLGNLVIASTVAGKTSHIVADFPSCALLAFVPDYELKTVESRKVLPNELTYKEAVAASSIANVLTASLLTNNLEVAGQMMEADRFHESYRASLIPELQLLREIGHEFGAYGTYLSGAGPTVMLLVPDDKLTLLTEKIMEKNLTGHLYPLKIDNKGLQVEESVF.

84–94 (PLARGLGSSSS) serves as a coordination point for ATP.

This sequence belongs to the GHMP kinase family. Homoserine kinase subfamily.

Its subcellular location is the cytoplasm. The enzyme catalyses L-homoserine + ATP = O-phospho-L-homoserine + ADP + H(+). It functions in the pathway amino-acid biosynthesis; L-threonine biosynthesis; L-threonine from L-aspartate: step 4/5. In terms of biological role, catalyzes the ATP-dependent phosphorylation of L-homoserine to L-homoserine phosphate. The chain is Homoserine kinase (thrB) from Lactococcus lactis subsp. cremoris (Streptococcus cremoris).